The following is a 336-amino-acid chain: Holliday junction branch migration complex subunit RuvB (336 aa).

Residues 1-11 (MDDDKLLSGDK) show a composition bias toward basic and acidic residues. The tract at residues 1–21 (MDDDKLLSGDKADDEEASLEK) is disordered. The tract at residues 1 to 184 (MDDDKLLSGD…FGIVEHMAYY (184 aa)) is large ATPase domain (RuvB-L). Residues leucine 23, arginine 24, glycine 65, lysine 68, threonine 69, threonine 70, 131–133 (EDF), arginine 174, tyrosine 184, and arginine 221 contribute to the ATP site. Threonine 69 provides a ligand contact to Mg(2+). A small ATPAse domain (RuvB-S) region spans residues 185 to 255 (EVADLEDIVK…IVARSLTYLR (71 aa)). The interval 258-336 (DAGLDETDNK…HLGFPYPENK (79 aa)) is head domain (RuvB-H). The DNA site is built by arginine 313 and arginine 318.

The protein belongs to the RuvB family. As to quaternary structure, homohexamer. Forms an RuvA(8)-RuvB(12)-Holliday junction (HJ) complex. HJ DNA is sandwiched between 2 RuvA tetramers; dsDNA enters through RuvA and exits via RuvB. An RuvB hexamer assembles on each DNA strand where it exits the tetramer. Each RuvB hexamer is contacted by two RuvA subunits (via domain III) on 2 adjacent RuvB subunits; this complex drives branch migration. In the full resolvosome a probable DNA-RuvA(4)-RuvB(12)-RuvC(2) complex forms which resolves the HJ.

It is found in the cytoplasm. The enzyme catalyses ATP + H2O = ADP + phosphate + H(+). In terms of biological role, the RuvA-RuvB-RuvC complex processes Holliday junction (HJ) DNA during genetic recombination and DNA repair, while the RuvA-RuvB complex plays an important role in the rescue of blocked DNA replication forks via replication fork reversal (RFR). RuvA specifically binds to HJ cruciform DNA, conferring on it an open structure. The RuvB hexamer acts as an ATP-dependent pump, pulling dsDNA into and through the RuvAB complex. RuvB forms 2 homohexamers on either side of HJ DNA bound by 1 or 2 RuvA tetramers; 4 subunits per hexamer contact DNA at a time. Coordinated motions by a converter formed by DNA-disengaged RuvB subunits stimulates ATP hydrolysis and nucleotide exchange. Immobilization of the converter enables RuvB to convert the ATP-contained energy into a lever motion, pulling 2 nucleotides of DNA out of the RuvA tetramer per ATP hydrolyzed, thus driving DNA branch migration. The RuvB motors rotate together with the DNA substrate, which together with the progressing nucleotide cycle form the mechanistic basis for DNA recombination by continuous HJ branch migration. Branch migration allows RuvC to scan DNA until it finds its consensus sequence, where it cleaves and resolves cruciform DNA. The chain is Holliday junction branch migration complex subunit RuvB from Lactiplantibacillus plantarum (strain ATCC BAA-793 / NCIMB 8826 / WCFS1) (Lactobacillus plantarum).